Reading from the N-terminus, the 30-residue chain is Cyclotide hyen-D (30 aa).

A cross-link (cyclopeptide (Gly-Asn)) is located at residues 1–30; sequence GFPCGESCVYIPCFTAAIGCSCKSKVCYKN. 3 disulfides stabilise this stretch: Cys-4–Cys-20, Cys-8–Cys-22, and Cys-13–Cys-27.

This is a cyclic peptide. In terms of tissue distribution, detected in stems (at protein level).

In terms of biological role, probably participates in a plant defense mechanism. Has strong cytotoxic activity against HUVEC cells (LC(50)= 0.58 uM) and various cancer cells including HeLa (LC(50)= 0.48 uM), MCF-7 and K562. Also displays some hemolytic activity. Binds to and induces leakage in phospholipd membranes, particularly ones containing 1-palmitoyl-2-oleophosphatidylethanolamine (POPE). This is Cyclotide hyen-D from Pigea enneasperma (Spade flower).